The following is a 248-amino-acid chain: Triosephosphate isomerase (248 aa).

9-11 provides a ligand contact to substrate; sequence NWK. Residue H94 is the Electrophile of the active site. E166 functions as the Proton acceptor in the catalytic mechanism. Substrate contacts are provided by residues G172, S212, and 233 to 234; that span reads GG.

It belongs to the triosephosphate isomerase family. As to quaternary structure, homodimer.

Its subcellular location is the cytoplasm. The enzyme catalyses D-glyceraldehyde 3-phosphate = dihydroxyacetone phosphate. It participates in carbohydrate biosynthesis; gluconeogenesis. It functions in the pathway carbohydrate degradation; glycolysis; D-glyceraldehyde 3-phosphate from glycerone phosphate: step 1/1. Functionally, involved in the gluconeogenesis. Catalyzes stereospecifically the conversion of dihydroxyacetone phosphate (DHAP) to D-glyceraldehyde-3-phosphate (G3P). The sequence is that of Triosephosphate isomerase from Clostridium acetobutylicum (strain ATCC 824 / DSM 792 / JCM 1419 / IAM 19013 / LMG 5710 / NBRC 13948 / NRRL B-527 / VKM B-1787 / 2291 / W).